The following is a 172-amino-acid chain: Nicotinamide-nucleotide adenylyltransferase (172 aa).

It belongs to the archaeal NMN adenylyltransferase family.

Its subcellular location is the cytoplasm. It carries out the reaction beta-nicotinamide D-ribonucleotide + ATP + H(+) = diphosphate + NAD(+). The protein operates within cofactor biosynthesis; NAD(+) biosynthesis; NAD(+) from nicotinamide D-ribonucleotide: step 1/1. In Methanococcus aeolicus (strain ATCC BAA-1280 / DSM 17508 / OCM 812 / Nankai-3), this protein is Nicotinamide-nucleotide adenylyltransferase.